Here is an 83-residue protein sequence, read N- to C-terminus: Small ribosomal subunit protein bS20 (83 aa).

It belongs to the bacterial ribosomal protein bS20 family.

Functionally, binds directly to 16S ribosomal RNA. In Staphylococcus aureus (strain JH1), this protein is Small ribosomal subunit protein bS20.